Here is a 76-residue protein sequence, read N- to C-terminus: Small ribosomal subunit protein bS18 (76 aa).

The protein belongs to the bacterial ribosomal protein bS18 family. As to quaternary structure, part of the 30S ribosomal subunit. Forms a tight heterodimer with protein bS6.

In terms of biological role, binds as a heterodimer with protein bS6 to the central domain of the 16S rRNA, where it helps stabilize the platform of the 30S subunit. The protein is Small ribosomal subunit protein bS18 of Marinobacter nauticus (strain ATCC 700491 / DSM 11845 / VT8) (Marinobacter aquaeolei).